The following is a 207-amino-acid chain: Superoxide dismutase [Mn] (207 aa).

Mn(2+) contacts are provided by histidine 28, histidine 76, aspartate 160, and histidine 164.

It belongs to the iron/manganese superoxide dismutase family. The cofactor is Mn(2+).

It catalyses the reaction 2 superoxide + 2 H(+) = H2O2 + O2. In terms of biological role, destroys superoxide anion radicals which are normally produced within the cells and which are toxic to biological systems. The polypeptide is Superoxide dismutase [Mn] (sodA) (Nocardia asteroides).